A 538-amino-acid polypeptide reads, in one-letter code: Inositol phosphate phosphatase IpgD (538 aa).

Cys-439 is a catalytic residue. Residues 439–445 carry the CX5R motif motif; it reads CKSGKDR.

It belongs to the phosphatase IpgD/SopB family.

The protein resides in the secreted. The catalysed reaction is a 1,2-diacyl-sn-glycero-3-phospho-(1D-myo-inositol-4,5-bisphosphate) + H2O = a 1,2-diacyl-sn-glycero-3-phospho-(1D-myo-inositol-5-phosphate) + phosphate. Functionally, converts phosphatidylinositol 4,5-bisphosphate (PtdIns 4,5-P2) to PtdIns 5-P. IpgD is injected by Shigella into the host cell and is required for invasion. The accumulation of PtdIns 5-P causes membrane ruffling and actin cytoskeleton rearrangements at the entry site. Acts in concert with IpaA to coordinate and control the membrane and cytoskeletal rearrangements induced early after invasion of the host cell. The polypeptide is Inositol phosphate phosphatase IpgD (ipgD) (Shigella flexneri).